Here is a 320-residue protein sequence, read N- to C-terminus: ATP-dependent 6-phosphofructokinase (320 aa).

An ATP-binding site is contributed by Gly12. 22-26 (RGVVR) lines the ADP pocket. Residues 73–74 (RF) and 103–106 (GDGS) each bind ATP. Asp104 serves as a coordination point for Mg(2+). 126-128 (TID) is a substrate binding site. The active-site Proton acceptor is the Asp128. ADP is bound at residue Arg155. Residues Arg163 and 170-172 (MGR) contribute to the substrate site. Residues 186–188 (GCE), Lys212, and 214–216 (KKH) each bind ADP. Substrate is bound by residues Glu223, Arg244, and 250-253 (HIQR).

The protein belongs to the phosphofructokinase type A (PFKA) family. ATP-dependent PFK group I subfamily. Prokaryotic clade 'B1' sub-subfamily. Homotetramer. Requires Mg(2+) as cofactor.

The protein resides in the cytoplasm. It carries out the reaction beta-D-fructose 6-phosphate + ATP = beta-D-fructose 1,6-bisphosphate + ADP + H(+). Its pathway is carbohydrate degradation; glycolysis; D-glyceraldehyde 3-phosphate and glycerone phosphate from D-glucose: step 3/4. Its activity is regulated as follows. Allosterically activated by ADP and other diphosphonucleosides, and allosterically inhibited by phosphoenolpyruvate. In terms of biological role, catalyzes the phosphorylation of D-fructose 6-phosphate to fructose 1,6-bisphosphate by ATP, the first committing step of glycolysis. The polypeptide is ATP-dependent 6-phosphofructokinase (Edwardsiella ictaluri (strain 93-146)).